A 334-amino-acid chain; its full sequence is Phosphate acyltransferase (334 aa).

It belongs to the PlsX family. As to quaternary structure, homodimer. Probably interacts with PlsY.

It localises to the cytoplasm. The enzyme catalyses a fatty acyl-[ACP] + phosphate = an acyl phosphate + holo-[ACP]. The protein operates within lipid metabolism; phospholipid metabolism. In terms of biological role, catalyzes the reversible formation of acyl-phosphate (acyl-PO(4)) from acyl-[acyl-carrier-protein] (acyl-ACP). This enzyme utilizes acyl-ACP as fatty acyl donor, but not acyl-CoA. In Caldicellulosiruptor bescii (strain ATCC BAA-1888 / DSM 6725 / KCTC 15123 / Z-1320) (Anaerocellum thermophilum), this protein is Phosphate acyltransferase.